We begin with the raw amino-acid sequence, 300 residues long: Porphobilinogen deaminase (300 aa).

Residue cysteine 239 is modified to S-(dipyrrolylmethanemethyl)cysteine.

Belongs to the HMBS family. As to quaternary structure, monomer. It depends on dipyrromethane as a cofactor.

The catalysed reaction is 4 porphobilinogen + H2O = hydroxymethylbilane + 4 NH4(+). Its pathway is porphyrin-containing compound metabolism; protoporphyrin-IX biosynthesis; coproporphyrinogen-III from 5-aminolevulinate: step 2/4. Its function is as follows. Tetrapolymerization of the monopyrrole PBG into the hydroxymethylbilane pre-uroporphyrinogen in several discrete steps. The chain is Porphobilinogen deaminase from Francisella tularensis subsp. holarctica (strain OSU18).